A 689-amino-acid polypeptide reads, in one-letter code: Transcription termination factor Rho (689 aa).

Residues Met-1–Thr-20 are compositionally biased toward polar residues. Disordered regions lie at residues Met-1–Val-90 and Ala-151–Asn-213. The span at Pro-52–Ala-65 shows a compositional bias: basic residues. Composition is skewed to low complexity over residues Asn-170–Glu-183 and Asn-191–Asn-213. In terms of domain architecture, Rho RNA-BD spans Ile-287–Glu-362. Residues Gly-405–Ser-410, Arg-417–Val-422, and Arg-448 each bind ATP.

This sequence belongs to the Rho family. As to quaternary structure, homohexamer. The homohexamer assembles into an open ring structure.

Functionally, facilitates transcription termination by a mechanism that involves Rho binding to the nascent RNA, activation of Rho's RNA-dependent ATPase activity, and release of the mRNA from the DNA template. This is Transcription termination factor Rho from Fibrobacter succinogenes (strain ATCC 19169 / S85).